Reading from the N-terminus, the 409-residue chain is Arginine biosynthesis bifunctional protein ArgJ (409 aa).

6 residues coordinate substrate: Thr-165, Lys-191, Thr-202, Glu-282, Asn-404, and Thr-409. Thr-202 acts as the Nucleophile in catalysis.

The protein belongs to the ArgJ family. Heterotetramer of two alpha and two beta chains.

Its subcellular location is the cytoplasm. It catalyses the reaction N(2)-acetyl-L-ornithine + L-glutamate = N-acetyl-L-glutamate + L-ornithine. It carries out the reaction L-glutamate + acetyl-CoA = N-acetyl-L-glutamate + CoA + H(+). It functions in the pathway amino-acid biosynthesis; L-arginine biosynthesis; L-ornithine and N-acetyl-L-glutamate from L-glutamate and N(2)-acetyl-L-ornithine (cyclic): step 1/1. The protein operates within amino-acid biosynthesis; L-arginine biosynthesis; N(2)-acetyl-L-ornithine from L-glutamate: step 1/4. Functionally, catalyzes two activities which are involved in the cyclic version of arginine biosynthesis: the synthesis of N-acetylglutamate from glutamate and acetyl-CoA as the acetyl donor, and of ornithine by transacetylation between N(2)-acetylornithine and glutamate. This chain is Arginine biosynthesis bifunctional protein ArgJ, found in Parasynechococcus marenigrum (strain WH8102).